The chain runs to 64 residues: Large ribosomal subunit protein bL35 (64 aa).

The protein belongs to the bacterial ribosomal protein bL35 family.

This Chloroherpeton thalassium (strain ATCC 35110 / GB-78) protein is Large ribosomal subunit protein bL35.